The following is a 302-amino-acid chain: tRNA-cytidine(32) 2-sulfurtransferase (302 aa).

The PP-loop motif motif lies at 44-49 (SGGKDS). The [4Fe-4S] cluster site is built by cysteine 119, cysteine 122, and cysteine 210.

The protein belongs to the TtcA family. Homodimer. It depends on Mg(2+) as a cofactor. [4Fe-4S] cluster is required as a cofactor.

It localises to the cytoplasm. It carries out the reaction cytidine(32) in tRNA + S-sulfanyl-L-cysteinyl-[cysteine desulfurase] + AH2 + ATP = 2-thiocytidine(32) in tRNA + L-cysteinyl-[cysteine desulfurase] + A + AMP + diphosphate + H(+). Its pathway is tRNA modification. Functionally, catalyzes the ATP-dependent 2-thiolation of cytidine in position 32 of tRNA, to form 2-thiocytidine (s(2)C32). The sulfur atoms are provided by the cysteine/cysteine desulfurase (IscS) system. The sequence is that of tRNA-cytidine(32) 2-sulfurtransferase from Tolumonas auensis (strain DSM 9187 / NBRC 110442 / TA 4).